The chain runs to 187 residues: NADPH-dependent 3-demethoxyubiquinone 3-hydroxylase, mitochondrial (187 aa).

The transit peptide at 1–8 (MFRVITRG) directs the protein to the mitochondrion. Residue lysine 21 participates in NADH binding. Repeat copies occupy residues 28–99 (AGEL…SALL) and 100–187 (GKEG…AEKI). Residues 28-187 (AGELGADRIY…KGAIAIAEKI (160 aa)) are 2 X approximate tandem repeats. 6 residues coordinate Fe cation: glutamate 30, glutamate 60, histidine 63, glutamate 112, glutamate 148, and histidine 151. Position 186 (lysine 186) interacts with NADH.

This sequence belongs to the COQ7 family. As to quaternary structure, component of a multi-subunit COQ enzyme complex. Requires Fe cation as cofactor.

The protein localises to the mitochondrion inner membrane. Its subcellular location is the mitochondrion. The protein resides in the nucleus. It catalyses the reaction a 5-methoxy-2-methyl-3-(all-trans-polyprenyl)benzoquinone + NADH + O2 = a 3-demethylubiquinone + NAD(+) + H2O. Its pathway is cofactor biosynthesis; ubiquinone biosynthesis. Functionally, catalyzes the hydroxylation of the 5-methoxy-2-methyl-3-(all-trans-polyprenyl)benzoquinone at the C6 position and participates in the biosynthesis of ubiquinone. Catalyzes the reaction through a substrate-mediated reduction pathway, whereby NADH shuttles electrons to 5-methoxy-2-methyl-3-(all-trans-decaprenyl)benzoquinone, which then transfers the electrons to the two Fe(3+) centers. The binding of 5-methoxy-2-methyl-3-(all-trans-polyprenyl)benzoquinone (DMQn) mediates reduction of the diiron center by nicotinamide adenine dinucleotide (NADH) and initiates oxygen activation for subsequent DMQ hydroxylation. Also has a structural role in the COQ enzyme complex, stabilizing other COQ polypeptides. Involved in lifespan determination in a ubiquinone-independent manner. Plays a role in modulating mitochondrial stress responses, acting in the nucleus, perhaps via regulating gene expression, independent of its characterized mitochondrial function in ubiquinone biosynthesis. Plays a role in modulating polyribosome formation. This is NADPH-dependent 3-demethoxyubiquinone 3-hydroxylase, mitochondrial from Caenorhabditis elegans.